The sequence spans 310 residues: MKITVIGAGNVGATTAFRIADKKLARELVLLDVVEGIPQGKGLDMYETGPVGLFDTKITGSNDYADTADSDIVIITAGLPRKPGMTREDLLMKNAGIVKEVTDNIMKHSKNPIIIVVSNPLDIMTHVAWVRSGLPKERVIGMAGVLDAARFRSFIAMELGVSMQDINACVLGGHGDAMVPVVKYTTVAGIPISDLLPAETIDKLVERTRNGGAEIVEHLKQGSAFYSPGSSVVEMVESIVLDRKRVLPCAVGLEGQYGIDKTFVGVPVKLGRNGVEQIYEINLDQADLDLLQKSAKIVDENCKMLESTIG.

NAD(+) is bound by residues glycine 7 to glycine 12 and aspartate 32. Positions 81 and 87 each coordinate substrate. NAD(+) is bound by residues asparagine 94 and valine 117–asparagine 119. Substrate-binding residues include asparagine 119 and arginine 150. Histidine 174 acts as the Proton acceptor in catalysis.

This sequence belongs to the LDH/MDH superfamily. MDH type 3 family. In terms of assembly, homotetramer; arranged as a dimer of dimers.

The catalysed reaction is (S)-malate + NAD(+) = oxaloacetate + NADH + H(+). In terms of biological role, catalyzes the reversible oxidation of malate to oxaloacetate. This is Malate dehydrogenase from Prosthecochloris vibrioformis (Chlorobium vibrioforme).